We begin with the raw amino-acid sequence, 355 residues long: tRNA uridine(34) hydroxylase (355 aa).

The Rhodanese domain maps to 146-240 (DDPDTVFVDM…YARQAKAQGL (95 aa)). C200 functions as the Cysteine persulfide intermediate in the catalytic mechanism.

This sequence belongs to the TrhO family.

The catalysed reaction is uridine(34) in tRNA + AH2 + O2 = 5-hydroxyuridine(34) in tRNA + A + H2O. In terms of biological role, catalyzes oxygen-dependent 5-hydroxyuridine (ho5U) modification at position 34 in tRNAs. The protein is tRNA uridine(34) hydroxylase of Pectobacterium atrosepticum (strain SCRI 1043 / ATCC BAA-672) (Erwinia carotovora subsp. atroseptica).